A 400-amino-acid polypeptide reads, in one-letter code: Aspartate aminotransferase (400 aa).

Residues Gly-37, Trp-126, and Asn-176 each contribute to the L-aspartate site. Lys-238 is modified (N6-(pyridoxal phosphate)lysine). An L-aspartate-binding site is contributed by Arg-367.

Belongs to the class-I pyridoxal-phosphate-dependent aminotransferase family. As to quaternary structure, homodimer. Pyridoxal 5'-phosphate serves as cofactor.

Its subcellular location is the cytoplasm. The enzyme catalyses L-aspartate + 2-oxoglutarate = oxaloacetate + L-glutamate. In terms of biological role, catalyzes the reversible conversion of aspartate and 2-oxoglutarate to glutamate and oxaloacetate. Has very weak prephenate aminotransferase activity. In Musicola paradisiaca (strain Ech703) (Dickeya paradisiaca), this protein is Aspartate aminotransferase.